Here is a 419-residue protein sequence, read N- to C-terminus: Gamma-glutamyl phosphate reductase (419 aa).

This sequence belongs to the gamma-glutamyl phosphate reductase family.

It is found in the cytoplasm. It catalyses the reaction L-glutamate 5-semialdehyde + phosphate + NADP(+) = L-glutamyl 5-phosphate + NADPH + H(+). It participates in amino-acid biosynthesis; L-proline biosynthesis; L-glutamate 5-semialdehyde from L-glutamate: step 2/2. Catalyzes the NADPH-dependent reduction of L-glutamate 5-phosphate into L-glutamate 5-semialdehyde and phosphate. The product spontaneously undergoes cyclization to form 1-pyrroline-5-carboxylate. This Syntrophomonas wolfei subsp. wolfei (strain DSM 2245B / Goettingen) protein is Gamma-glutamyl phosphate reductase.